A 270-amino-acid chain; its full sequence is MAAPGEALTPSGYITHHLTNLSTYKLGLVAEESSFWNVHIDSLFFSWFTGLIFLGIFYAVARKTTAGVPGKLQCAVEMIVEFVATNVKDTFHGRNPLIAPLALTIFCWVFLMNLMDLVPIDFLPYPAEHWLGIPYLKVVPSADVNITMAMALGVFALMIYYSIKVKGLGGFARELALHPFNHWTMIPFNLLIEVVSLLAKPLSLGMRLFGNMFAGEVVFILCAAMLPWYLQWMGSLPWAIFHILVILIQAFVFMMLTIVYMSMAHEDSDH.

The next 5 helical transmembrane spans lie at 40–60 (IDSL…FYAV), 98–118 (IAPL…MDLV), 143–163 (DVNI…YYSI), 208–228 (LFGN…MLPW), and 239–259 (AIFH…LTIV).

The protein belongs to the ATPase A chain family. As to quaternary structure, F-type ATPases have 2 components, CF(1) - the catalytic core - and CF(0) - the membrane proton channel. CF(1) has five subunits: alpha(3), beta(3), gamma(1), delta(1), epsilon(1). CF(0) has three main subunits: a(1), b(2) and c(9-12). The alpha and beta chains form an alternating ring which encloses part of the gamma chain. CF(1) is attached to CF(0) by a central stalk formed by the gamma and epsilon chains, while a peripheral stalk is formed by the delta and b chains.

It is found in the cell inner membrane. Its function is as follows. Key component of the proton channel; it plays a direct role in the translocation of protons across the membrane. The protein is ATP synthase subunit a of Vibrio vulnificus (strain CMCP6).